Here is a 153-residue protein sequence, read N- to C-terminus: Biogenesis of lysosome-related organelles complex 1 subunit 1 (153 aa).

Residues 1 to 11 (MAPGSRGERSS) show a composition bias toward basic and acidic residues. The disordered stretch occupies residues 1 to 27 (MAPGSRGERSSFRSRRGPGVPSPQPDV). A coiled-coil region spans residues 27–59 (VTMLSRLLKEHQAKQNERKELQEKRRREAITAA).

This sequence belongs to the BLOC1S1 family. Component of the biogenesis of lysosome-related organelles complex 1 (BLOC-1) composed of BLOC1S1, BLOC1S2, BLOC1S3, BLOC1S4, BLOC1S5, BLOC1S6, DTNBP1/BLOC1S7 and SNAPIN/BLOC1S8. Octamer composed of one copy each BLOC1S1, BLOC1S2, BLOC1S3, BLOC1S4, BLOC1S5, BLOC1S6, DTNBP1/BLOC1S7 and SNAPIN/BLOC1S8. The BLOC-1 complex associates with the AP-3 protein complex and membrane protein cargos. Component of the BLOC-one-related complex (BORC) which is composed of BLOC1S1, BLOC1S2, BORCS5, BORCS6, BORCS7, BORCS8, KXD1 and SNAPIN. Interacts with ATP5F1A and NDUFA9; involved in their acetylation on lysine residues. Interacts with KXD1.

It localises to the mitochondrion intermembrane space. It is found in the mitochondrion matrix. The protein resides in the cytoplasm. Its subcellular location is the cytosol. The protein localises to the lysosome membrane. It catalyses the reaction L-lysyl-[protein] + acetyl-CoA = N(6)-acetyl-L-lysyl-[protein] + CoA + H(+). Functionally, component of the BLOC-1 complex, a complex that is required for normal biogenesis of lysosome-related organelles (LRO), such as platelet dense granules and melanosomes. In concert with the AP-3 complex, the BLOC-1 complex is required to target membrane protein cargos into vesicles assembled at cell bodies for delivery into neurites and nerve terminals. The BLOC-1 complex, in association with SNARE proteins, is also proposed to be involved in neurite extension. As part of the BORC complex may play a role in lysosomes movement and localization at the cell periphery. Associated with the cytosolic face of lysosomes, the BORC complex may recruit ARL8B and couple lysosomes to microtubule plus-end-directed kinesin motor. In terms of biological role, acts as a protein acetyltransferase. Negatively regulates aerobic respiration through mitochondrial protein lysine-acetylation. May counteract the action of the deacetylase SIRT3 by acetylating and regulating proteins of the mitochondrial respiratory chain including ATP5F1A and NDUFA9. Acts as a regulator of mTORC2 signaling in response to hypotoxic stress by mediating acetylation of RICTOR, thereby protecting RICTOR against ubiquitination and subsequent degradation by the proteasome. This chain is Biogenesis of lysosome-related organelles complex 1 subunit 1 (BLOC1S1), found in Homo sapiens (Human).